Consider the following 62-residue polypeptide: Protein sigN176 (62 aa).

The polypeptide is Protein sigN176 (Dictyostelium discoideum (Social amoeba)).